The primary structure comprises 446 residues: Phosphoglucosamine mutase (446 aa).

The Phosphoserine intermediate role is filled by Ser-101. 4 residues coordinate Mg(2+): Ser-101, Asp-240, Asp-242, and Asp-244. Phosphoserine is present on Ser-101.

Belongs to the phosphohexose mutase family. The cofactor is Mg(2+). Activated by phosphorylation.

It catalyses the reaction alpha-D-glucosamine 1-phosphate = D-glucosamine 6-phosphate. Functionally, catalyzes the conversion of glucosamine-6-phosphate to glucosamine-1-phosphate. This chain is Phosphoglucosamine mutase, found in Coxiella burnetii (strain CbuK_Q154) (Coxiella burnetii (strain Q154)).